The following is a 1064-amino-acid chain: Isoleucine--tRNA ligase, cytoplasmic (1064 aa).

The 'HIGH' region motif lies at 42–52 (PFATGRPHHGH). The short motif at 597–601 (KMSKR) is the 'KMSKS' region element. Residue Lys600 coordinates ATP.

It belongs to the class-I aminoacyl-tRNA synthetase family.

It is found in the cytoplasm. It catalyses the reaction tRNA(Ile) + L-isoleucine + ATP = L-isoleucyl-tRNA(Ile) + AMP + diphosphate. This is Isoleucine--tRNA ligase, cytoplasmic (irs1) from Schizosaccharomyces pombe (strain 972 / ATCC 24843) (Fission yeast).